The following is a 317-amino-acid chain: 2,3-dihydroxyphenylpropionate/2,3-dihydroxicinnamic acid 1,2-dioxygenase 2 (317 aa).

Residue His115 is the Proton donor of the active site. Residue His179 is the Proton acceptor of the active site.

The protein belongs to the LigB/MhpB extradiol dioxygenase family. Homotetramer. Fe(2+) serves as cofactor.

The enzyme catalyses 3-(2,3-dihydroxyphenyl)propanoate + O2 = (2Z,4E)-2-hydroxy-6-oxonona-2,4-dienedioate + H(+). It carries out the reaction (2E)-3-(2,3-dihydroxyphenyl)prop-2-enoate + O2 = (2Z,4E,7E)-2-hydroxy-6-oxonona-2,4,7-trienedioate + H(+). The protein operates within aromatic compound metabolism; 3-phenylpropanoate degradation. Its function is as follows. Catalyzes the non-heme iron(II)-dependent oxidative cleavage of 2,3-dihydroxyphenylpropionic acid and 2,3-dihydroxicinnamic acid into 2-hydroxy-6-ketononadienedioate and 2-hydroxy-6-ketononatrienedioate, respectively. The polypeptide is 2,3-dihydroxyphenylpropionate/2,3-dihydroxicinnamic acid 1,2-dioxygenase 2 (Dechloromonas aromatica (strain RCB)).